The chain runs to 303 residues: Porphobilinogen deaminase (303 aa).

Cys-235 is modified (S-(dipyrrolylmethanemethyl)cysteine).

It belongs to the HMBS family. Monomer. Dipyrromethane serves as cofactor.

The catalysed reaction is 4 porphobilinogen + H2O = hydroxymethylbilane + 4 NH4(+). It participates in porphyrin-containing compound metabolism; protoporphyrin-IX biosynthesis; coproporphyrinogen-III from 5-aminolevulinate: step 2/4. Its function is as follows. Tetrapolymerization of the monopyrrole PBG into the hydroxymethylbilane pre-uroporphyrinogen in several discrete steps. The chain is Porphobilinogen deaminase from Campylobacter fetus subsp. fetus (strain 82-40).